We begin with the raw amino-acid sequence, 209 residues long: Orotate phosphoribosyltransferase (209 aa).

Residues R96, K100, H102, and 122–130 (EDLISTGGS) contribute to the 5-phospho-alpha-D-ribose 1-diphosphate site. S126 serves as a coordination point for orotate.

This sequence belongs to the purine/pyrimidine phosphoribosyltransferase family. PyrE subfamily. As to quaternary structure, homodimer. Requires Mg(2+) as cofactor.

It catalyses the reaction orotidine 5'-phosphate + diphosphate = orotate + 5-phospho-alpha-D-ribose 1-diphosphate. It participates in pyrimidine metabolism; UMP biosynthesis via de novo pathway; UMP from orotate: step 1/2. In terms of biological role, catalyzes the transfer of a ribosyl phosphate group from 5-phosphoribose 1-diphosphate to orotate, leading to the formation of orotidine monophosphate (OMP). This is Orotate phosphoribosyltransferase from Streptococcus thermophilus (strain CNRZ 1066).